A 127-amino-acid chain; its full sequence is Ribonuclease P protein component 1 (127 aa).

This sequence belongs to the eukaryotic/archaeal RNase P protein component 1 family. As to quaternary structure, consists of a catalytic RNA component and at least 4 protein subunits. Forms a subcomplex with Rnp4 which stimulates the catalytic RNA.

It localises to the cytoplasm. The enzyme catalyses Endonucleolytic cleavage of RNA, removing 5'-extranucleotides from tRNA precursor.. Functionally, part of ribonuclease P, a protein complex that generates mature tRNA molecules by cleaving their 5'-ends. The RNA is catalytic, but its KM for pre-tRNA is 170-fold decreased in the presence of the 4 known protein subunits (Rnp1-4). The protein subunits also decrease the amount of Mg(2+) needed for activity. In Pyrococcus furiosus (strain ATCC 43587 / DSM 3638 / JCM 8422 / Vc1), this protein is Ribonuclease P protein component 1.